We begin with the raw amino-acid sequence, 280 residues long: Golgi to ER traffic protein 2 (280 aa).

Basic and acidic residues-rich tracts occupy residues 1–17 (MSLS…ERRQ), 44–62 (SALD…EAVK), and 71–80 (AKKESTAQAK). The segment at 1–80 (MSLSEAEKRK…AKKESTAQAK (80 aa)) is disordered. At 1–146 (MSLSEAEKRK…VEYHKYRVNT (146 aa)) the chain is on the cytoplasmic side. A helical membrane pass occupies residues 147 to 166 (LTAKTTLVKWIVLLAYIFLL). The Lumenal portion of the chain corresponds to 167-191 (TRTDDTYFPFVVRSYLPEVFTSQSS). Residues 192-211 (FFSIFLTFEILATSIYYQLS) form a helical membrane-spanning segment. Over 212 to 258 (VGVERETGVKTLQDTSKIVSLVSMVPEGILPIADLRGKVILAMKYWN) the chain is Cytoplasmic. The helical transmembrane segment at 259-279 (IIAMMIGDVCFVLVAIGLVSQ) threads the bilayer. Ile-280 is a topological domain (lumenal).

The protein belongs to the GET2 family. Component of the Golgi to ER traffic (GET) complex, which is composed of GET1, GET2 and GET3. Within the complex, GET1 and GET2 form a heterotetramer which is stabilized by phosphatidylinositol binding and which binds to the GET3 homodimer.

It is found in the endoplasmic reticulum membrane. The protein resides in the golgi apparatus membrane. Its function is as follows. Required for the post-translational delivery of tail-anchored (TA) proteins to the endoplasmic reticulum. Together with GET1, acts as a membrane receptor for soluble GET3, which recognizes and selectively binds the transmembrane domain of TA proteins in the cytosol. The GET complex cooperates with the HDEL receptor ERD2 to mediate the ATP-dependent retrieval of resident ER proteins that contain a C-terminal H-D-E-L retention signal from the Golgi to the ER. The chain is Golgi to ER traffic protein 2 from Candida glabrata (strain ATCC 2001 / BCRC 20586 / JCM 3761 / NBRC 0622 / NRRL Y-65 / CBS 138) (Yeast).